A 405-amino-acid chain; its full sequence is Syndecan-3 (405 aa).

Residues 1–22 form the signal peptide; sequence MPAELRRLAVLLLLLSARAALA. Over 23-347 the chain is Extracellular; it reads QPWRNENYER…PQKNILERKE (325 aa). The disordered stretch occupies residues 31-59; it reads ERPVDLEGSGDDDPFGDDELDDIYSGSGS. Residues 38 to 52 show a composition bias toward acidic residues; sequence GSGDDDPFGDDELDD. Residues S39, S55, S57, S59, and S66 are each glycosylated (O-linked (Xyl...) (glycosaminoglycan) serine). Disordered regions lie at residues 134–159 and 191–301; these read TTTA…ATTT and TRAT…ELGN. Low complexity predominate over residues 191 to 201; that stretch reads TRATTLETPTT. Over residues 202 to 237 the composition is skewed to polar residues; the sequence is SIPETSVLTEVTTSRLVPSSTAKPRSLPKPSTSRTA. O-linked (Xyl...) (glycosaminoglycan) serine glycosylation is found at S280, S283, and S330. Residues 348–372 traverse the membrane as a helical segment; sequence VLIAVIVGGVVGALFAAFLVMLLIY. Topologically, residues 373-405 are cytoplasmic; it reads RMKKKDEGSYTLEEPKQANVTYQKPDKQEEFYA.

This sequence belongs to the syndecan proteoglycan family. O-glycosylated within the Thr/Ser-rich region which could interact with lectin domains on other molecules. In terms of tissue distribution, proximal chondrogenic central core of embryonic limb buds where cartilage differentiation is being initiated.

The protein localises to the membrane. Its function is as follows. Cell surface proteoglycan that may bear both heparan sulfate and chondroitin sulfate. The multiple functional domains provide potential sites for mediating the adhesive cell-matrix interactions and cytoskeletal reorganization involved in limb chondrogenesis. Interaction with other matrix ligands as well as phosphorylation and shedding of the ectodomain might be involved in cell shape changes that occur during chondrogenesis. Furthermore, shedding of the ectodomain might break the adhesive interactions that promoted condensation, thus facilitating the deposition of cartilage matrix molecules. The sequence is that of Syndecan-3 (SDC3) from Gallus gallus (Chicken).